The primary structure comprises 658 residues: Putative endo-beta-N-acetylglucosaminidase (658 aa).

The N-terminal stretch at 1 to 23 (MKKVRFIFLALLFFLASPEGAMA) is a signal peptide. 13 Cell wall-binding repeats span residues 42–63 (ANEW…DANY), 65–84 (ENEW…GGYM), 86–105 (KSEW…DGKM), 124–145 (IEDW…DGQH), 147–166 (EKEW…GGYL), 185–206 (QQGW…NGNY), 208–227 (DKEW…GGYM), 229–248 (ANEW…DGKM), 250–271 (EKEW…GGYM), 273–292 (ANEW…DGKI), 294–315 (EKEW…GGYM), 317–336 (ANEW…DGKI), and 338–359 (EKEW…GGYM).

It belongs to the glycosyl hydrolase 73 family.

The protein resides in the secreted. It carries out the reaction an N(4)-(oligosaccharide-(1-&gt;3)-[oligosaccharide-(1-&gt;6)]-beta-D-Man-(1-&gt;4)-beta-D-GlcNAc-(1-&gt;4)-alpha-D-GlcNAc)-L-asparaginyl-[protein] + H2O = an oligosaccharide-(1-&gt;3)-[oligosaccharide-(1-&gt;6)]-beta-D-Man-(1-&gt;4)-D-GlcNAc + N(4)-(N-acetyl-beta-D-glucosaminyl)-L-asparaginyl-[protein]. Functionally, plays an important role in cell wall degradation and cell separation. This Streptococcus pneumoniae serotype 4 (strain ATCC BAA-334 / TIGR4) protein is Putative endo-beta-N-acetylglucosaminidase (lytB).